We begin with the raw amino-acid sequence, 203 residues long: Cardiotrophin-1 (203 aa).

Belongs to the IL-6 superfamily. Highly expressed in heart, skeletal muscle, liver, lung and kidney. Lower levels in testis and brain. No expression in spleen.

Its subcellular location is the secreted. Induces cardiac myocyte hypertrophy in vitro. Binds to and activates the ILST/gp130 receptor. The protein is Cardiotrophin-1 (Ctf1) of Mus musculus (Mouse).